The primary structure comprises 346 residues: NADH-ubiquinone oxidoreductase chain 2 (346 aa).

The next 11 membrane-spanning stretches (helical) occupy residues 1-21 (MNPH…TITI), 25-45 (HWIM…PLIS), 60-80 (FLVQ…NAWA), 96-116 (MLLT…FWFP), 124-144 (LTTA…ILLM), 149-169 (LNPT…GWMG), 178-198 (ILAF…IYNP), 200-220 (LTLL…LSLN), 242-262 (AALM…GFMP), 274-294 (EMTT…FFYL), and 325-345 (IAIL…ILAA).

This sequence belongs to the complex I subunit 2 family.

It is found in the mitochondrion inner membrane. The enzyme catalyses a ubiquinone + NADH + 5 H(+)(in) = a ubiquinol + NAD(+) + 4 H(+)(out). Core subunit of the mitochondrial membrane respiratory chain NADH dehydrogenase (Complex I) that is believed to belong to the minimal assembly required for catalysis. Complex I functions in the transfer of electrons from NADH to the respiratory chain. The immediate electron acceptor for the enzyme is believed to be ubiquinone. The sequence is that of NADH-ubiquinone oxidoreductase chain 2 (MT-ND2) from Struthio camelus (Common ostrich).